A 179-amino-acid polypeptide reads, in one-letter code: Large ribosomal subunit protein uL5 (179 aa).

Belongs to the universal ribosomal protein uL5 family. In terms of assembly, part of the 50S ribosomal subunit; part of the 5S rRNA/L5/L18/L25 subcomplex. Contacts the 5S rRNA and the P site tRNA. Forms a bridge to the 30S subunit in the 70S ribosome.

In terms of biological role, this is one of the proteins that bind and probably mediate the attachment of the 5S RNA into the large ribosomal subunit, where it forms part of the central protuberance. In the 70S ribosome it contacts protein S13 of the 30S subunit (bridge B1b), connecting the 2 subunits; this bridge is implicated in subunit movement. Contacts the P site tRNA; the 5S rRNA and some of its associated proteins might help stabilize positioning of ribosome-bound tRNAs. This is Large ribosomal subunit protein uL5 from Buchnera aphidicola subsp. Acyrthosiphon pisum (strain APS) (Acyrthosiphon pisum symbiotic bacterium).